Here is a 90-residue protein sequence, read N- to C-terminus: MDSKDQTMFYNFGDDSIEEDVKKLMKQVYVALEEKGYNPVNQIVGYLLSGDPAYIPRHKDARSLIRRLERDEIIEELVKAYLKNNEIGEK.

This sequence belongs to the UPF0297 family.

This Listeria welshimeri serovar 6b (strain ATCC 35897 / DSM 20650 / CCUG 15529 / CIP 8149 / NCTC 11857 / SLCC 5334 / V8) protein is UPF0297 protein lwe1516.